A 131-amino-acid polypeptide reads, in one-letter code: UPF0102 protein YraN (131 aa).

Belongs to the UPF0102 family.

This Salmonella typhi protein is UPF0102 protein YraN.